The primary structure comprises 186 residues: Large ribosomal subunit protein uL5 (186 aa).

It belongs to the universal ribosomal protein uL5 family. As to quaternary structure, part of the 50S ribosomal subunit; part of the 5S rRNA/L5/L18/L25 subcomplex. Contacts the 5S rRNA and the P site tRNA. Forms a bridge to the 30S subunit in the 70S ribosome.

In terms of biological role, this is one of the proteins that bind and probably mediate the attachment of the 5S RNA into the large ribosomal subunit, where it forms part of the central protuberance. In the 70S ribosome it contacts protein S13 of the 30S subunit (bridge B1b), connecting the 2 subunits; this bridge is implicated in subunit movement. Contacts the P site tRNA; the 5S rRNA and some of its associated proteins might help stabilize positioning of ribosome-bound tRNAs. The sequence is that of Large ribosomal subunit protein uL5 from Cereibacter sphaeroides (strain ATCC 17023 / DSM 158 / JCM 6121 / CCUG 31486 / LMG 2827 / NBRC 12203 / NCIMB 8253 / ATH 2.4.1.) (Rhodobacter sphaeroides).